Here is a 149-residue protein sequence, read N- to C-terminus: Calmodulin-2 (149 aa).

Ala2 is subject to N-acetylalanine. EF-hand domains are found at residues 8-43 (EQIA…LGQN), 44-79 (PTEA…KMKD), 81-116 (DSEE…LGEK), and 117-149 (LTDE…MTSK). Asp21, Asp23, Asp25, Thr27, Glu32, Asp57, Asp59, Asn61, Thr63, Glu68, Asp94, Asp96, Asn98, and Glu105 together coordinate Ca(2+). An N6,N6,N6-trimethyllysine modification is found at Lys116. Asp130, Asp132, Asp134, Gln136, and Glu141 together coordinate Ca(2+).

Belongs to the calmodulin family.

Calmodulin mediates the control of a large number of enzymes, ion channels and other proteins by Ca(2+). Among the enzymes to be stimulated by the calmodulin-Ca(2+) complex are a number of protein kinases and phosphatases. This Branchiostoma lanceolatum (Common lancelet) protein is Calmodulin-2 (CAM2).